The sequence spans 230 residues: MHDPENRLTDAYEPEVGNLPNEDSGRDEENVVKTGTTTVGLSTEDGVIIATDRRASLGGRFVSNKQVQKVEQIHPTAAMTLVGSVGGAQSFIRSLRAEADLYEVRRDEPLSIHALATLAGNFARGGPYFAINPIVGGVDEEGSHVYSVDPAGGVLEDDYTVTGSGTMVATGTIEGQYDHGMSLSEARDLAIRAVNAAAERDTGSGNGVVLAEITDEGVEIDAFDDYESAE.

Residues 1-10 (MHDPENRLTD) show a composition bias toward basic and acidic residues. The interval 1–29 (MHDPENRLTDAYEPEVGNLPNEDSGRDEE) is disordered. Residues 1-35 (MHDPENRLTDAYEPEVGNLPNEDSGRDEENVVKTG) constitute a propeptide, removed in mature form; by autocatalysis. Catalysis depends on threonine 36, which acts as the Nucleophile.

It belongs to the peptidase T1B family. As to quaternary structure, the 20S proteasome core is composed of 14 alpha and 14 beta subunits that assemble into four stacked heptameric rings, resulting in a barrel-shaped structure. The two inner rings, each composed of seven catalytic beta subunits, are sandwiched by two outer rings, each composed of seven alpha subunits. The catalytic chamber with the active sites is on the inside of the barrel. Has a gated structure, the ends of the cylinder being occluded by the N-termini of the alpha-subunits. Is capped at one or both ends by the proteasome regulatory ATPase, PAN.

It localises to the cytoplasm. The enzyme catalyses Cleavage of peptide bonds with very broad specificity.. Its activity is regulated as follows. The formation of the proteasomal ATPase PAN-20S proteasome complex, via the docking of the C-termini of PAN into the intersubunit pockets in the alpha-rings, triggers opening of the gate for substrate entry. Interconversion between the open-gate and close-gate conformations leads to a dynamic regulation of the 20S proteasome proteolysis activity. In terms of biological role, component of the proteasome core, a large protease complex with broad specificity involved in protein degradation. The protein is Proteasome subunit beta 2 of Haloarcula marismortui (strain ATCC 43049 / DSM 3752 / JCM 8966 / VKM B-1809) (Halobacterium marismortui).